We begin with the raw amino-acid sequence, 210 residues long: Ribosomal RNA small subunit methyltransferase G (210 aa).

Residues leucine 78, 124–125 (IE), and arginine 138 contribute to the S-adenosyl-L-methionine site.

This sequence belongs to the methyltransferase superfamily. RNA methyltransferase RsmG family.

The protein localises to the cytoplasm. It carries out the reaction guanosine(527) in 16S rRNA + S-adenosyl-L-methionine = N(7)-methylguanosine(527) in 16S rRNA + S-adenosyl-L-homocysteine. Functionally, specifically methylates the N7 position of guanine in position 527 of 16S rRNA. The sequence is that of Ribosomal RNA small subunit methyltransferase G from Bordetella bronchiseptica (strain ATCC BAA-588 / NCTC 13252 / RB50) (Alcaligenes bronchisepticus).